We begin with the raw amino-acid sequence, 255 residues long: Ribosomal RNA small subunit methyltransferase G (255 aa).

S-adenosyl-L-methionine is bound by residues G89, F94, 112–114 (DST), 140–141 (VE), and R159.

It belongs to the methyltransferase superfamily. RNA methyltransferase RsmG family.

It localises to the cytoplasm. Functionally, specifically methylates the N7 position of a guanine in 16S rRNA. In Trichodesmium erythraeum (strain IMS101), this protein is Ribosomal RNA small subunit methyltransferase G.